We begin with the raw amino-acid sequence, 607 residues long: UvrABC system protein C (607 aa).

The 79-residue stretch at 16-94 (GRPGVYRMFD…IKEWRPPYNI (79 aa)) folds into the GIY-YIG domain. The region spanning 203–238 (QQLGNELNAEMEKAAMALDFEKAAELRDQIALLRRV) is the UVR domain.

This sequence belongs to the UvrC family. Interacts with UvrB in an incision complex.

It is found in the cytoplasm. In terms of biological role, the UvrABC repair system catalyzes the recognition and processing of DNA lesions. UvrC both incises the 5' and 3' sides of the lesion. The N-terminal half is responsible for the 3' incision and the C-terminal half is responsible for the 5' incision. This is UvrABC system protein C from Pseudomonas putida (strain ATCC 700007 / DSM 6899 / JCM 31910 / BCRC 17059 / LMG 24140 / F1).